We begin with the raw amino-acid sequence, 41 residues long: Large ribosomal subunit protein bL36 (41 aa).

This sequence belongs to the bacterial ribosomal protein bL36 family.

The polypeptide is Large ribosomal subunit protein bL36 (Rhizobium rhizogenes (strain K84 / ATCC BAA-868) (Agrobacterium radiobacter)).